Here is a 312-residue protein sequence, read N- to C-terminus: NADPH-dependent alpha-keto amide reductase (312 aa).

Residues Gly25, Thr26, Arg27, and Asp59 each contribute to the NADPH site. Active-site proton donor residues include Tyr64 and His122. Ser123 is subject to Phosphoserine. NADPH-binding residues include Ser157, Gln179, Ser208, Leu210, Thr257, Thr258, Ser259, Ser260, Lys261, and Arg264.

It belongs to the aldo/keto reductase family. As to quaternary structure, monomer. In terms of processing, the N-terminus is blocked.

It is found in the cytoplasm. The protein resides in the nucleus. Functionally, reduces aromatic alpha-keto amides, aliphatic and aromatic alpha-keto esters, but not beta-keto esters. The chain is NADPH-dependent alpha-keto amide reductase from Saccharomyces cerevisiae (strain ATCC 204508 / S288c) (Baker's yeast).